We begin with the raw amino-acid sequence, 163 residues long: 6,7-dimethyl-8-ribityllumazine synthase (163 aa).

Residues Phe-27, 58-60 (ALE), and 87-89 (CVV) contribute to the 5-amino-6-(D-ribitylamino)uracil site. Residue 92 to 93 (DT) participates in (2S)-2-hydroxy-3-oxobutyl phosphate binding. Catalysis depends on His-95, which acts as the Proton donor. Asn-120 is a binding site for 5-amino-6-(D-ribitylamino)uracil. Arg-134 contributes to the (2S)-2-hydroxy-3-oxobutyl phosphate binding site.

The protein belongs to the DMRL synthase family.

It catalyses the reaction (2S)-2-hydroxy-3-oxobutyl phosphate + 5-amino-6-(D-ribitylamino)uracil = 6,7-dimethyl-8-(1-D-ribityl)lumazine + phosphate + 2 H2O + H(+). Its pathway is cofactor biosynthesis; riboflavin biosynthesis; riboflavin from 2-hydroxy-3-oxobutyl phosphate and 5-amino-6-(D-ribitylamino)uracil: step 1/2. In terms of biological role, catalyzes the formation of 6,7-dimethyl-8-ribityllumazine by condensation of 5-amino-6-(D-ribitylamino)uracil with 3,4-dihydroxy-2-butanone 4-phosphate. This is the penultimate step in the biosynthesis of riboflavin. The chain is 6,7-dimethyl-8-ribityllumazine synthase from Nitrobacter hamburgensis (strain DSM 10229 / NCIMB 13809 / X14).